Reading from the N-terminus, the 151-residue chain is Nucleoside diphosphate kinase (151 aa).

ATP-binding residues include K11, F59, R87, R104, and N114. H117 functions as the Pros-phosphohistidine intermediate in the catalytic mechanism.

It belongs to the NDK family. Homotrimer. Mg(2+) is required as a cofactor.

It catalyses the reaction a 2'-deoxyribonucleoside 5'-diphosphate + ATP = a 2'-deoxyribonucleoside 5'-triphosphate + ADP. The enzyme catalyses a ribonucleoside 5'-diphosphate + ATP = a ribonucleoside 5'-triphosphate + ADP. Its function is as follows. Major role in the synthesis of nucleoside triphosphates other than ATP. The ATP gamma phosphate is transferred to the NDP beta phosphate via a ping-pong mechanism, using a phosphorylated active-site intermediate. This Schizosaccharomyces pombe (strain 972 / ATCC 24843) (Fission yeast) protein is Nucleoside diphosphate kinase (ndk1).